The chain runs to 485 residues: Protein nucleotidyltransferase YdiU (485 aa).

Residues Gly90, Gly92, Arg93, Lys113, Asp125, Gly126, Arg176, and Arg183 each contribute to the ATP site. Catalysis depends on Asp252, which acts as the Proton acceptor. Mg(2+) contacts are provided by Asn253 and Asp262. Asp262 is an ATP binding site.

Belongs to the SELO family. Requires Mg(2+) as cofactor. The cofactor is Mn(2+).

The enzyme catalyses L-seryl-[protein] + ATP = 3-O-(5'-adenylyl)-L-seryl-[protein] + diphosphate. The catalysed reaction is L-threonyl-[protein] + ATP = 3-O-(5'-adenylyl)-L-threonyl-[protein] + diphosphate. It carries out the reaction L-tyrosyl-[protein] + ATP = O-(5'-adenylyl)-L-tyrosyl-[protein] + diphosphate. It catalyses the reaction L-histidyl-[protein] + UTP = N(tele)-(5'-uridylyl)-L-histidyl-[protein] + diphosphate. The enzyme catalyses L-seryl-[protein] + UTP = O-(5'-uridylyl)-L-seryl-[protein] + diphosphate. The catalysed reaction is L-tyrosyl-[protein] + UTP = O-(5'-uridylyl)-L-tyrosyl-[protein] + diphosphate. Nucleotidyltransferase involved in the post-translational modification of proteins. It can catalyze the addition of adenosine monophosphate (AMP) or uridine monophosphate (UMP) to a protein, resulting in modifications known as AMPylation and UMPylation. This is Protein nucleotidyltransferase YdiU from Aliivibrio salmonicida (strain LFI1238) (Vibrio salmonicida (strain LFI1238)).